The following is a 3133-amino-acid chain: Hemocytin (3133 aa).

One can recognise a TIL 1 domain in the interval 40–96; sequence CTGGQQYTVCADSCLRKCSDTALAASGQCKPVCVEGCACSPSQLLDDNGVCVPVAKC. N151 carries an N-linked (GlcNAc...) asparagine glycan. The region spanning 153–209 is the TIL 2 domain; the sequence is TAQNMEFTTCETSEPLTCKNMHLPPSTQTAECRPGCQCKKGQVLDTASKRCVPATQC. N237 carries an N-linked (GlcNAc...) asparagine glycan. The 172-residue stretch at 247 to 418 folds into the VWFD 1 domain; the sequence is GVCGAWGDSH…DSWKLKPTCP (172 aa). 3 disulfides stabilise this stretch: C249–C380, C271–C417, and C295–C302. Residues 509 to 576 enclose the TIL 3 domain; it reads CDEVCSNYDS…TTECVPRAKC (68 aa). N-linked (GlcNAc...) asparagine glycosylation occurs at N564. Residues 661-680 are disordered; it reads PDGQSVESEPLPKPNELQIG. The region spanning 770–837 is the TIL 4 domain; that stretch reads CPPGEVYQAC…ERTCVPVKDC (68 aa). A disordered region spans residues 899–924; sequence STTTTTTTSTTTTTTTPEPTETTTET. 2 cysteine pairs are disulfide-bonded: C940–C1095 and C1116–C1254. F5/8 type C domains follow at residues 940-1095 and 1116-1254; these read CSPD…IIGC and CTEP…PIGC. N-linked (GlcNAc...) asparagine glycans are attached at residues N1170, N1387, N1622, N1727, and N1847. The 176-residue stretch at 1619-1794 folds into the VWFD 2 domain; that stretch reads VFCNMTGRTF…KPGVPADACA (176 aa). Disulfide bonds link C1621–C1754 and C1641–C1793. A TIL 5 domain is found at 1890-1948; it reads CPPPLVHYDCYRKRCEETCAPYPNAARACPAQEGQCSPGCYCPDGKLRKGDQCVLPADC. The VWFD 3 domain maps to 1951-2136; sequence CTCTGVGTPA…WQASPEKLTE (186 aa). 2 disulfides stabilise this stretch: C1953/C2099 and C2001/C2009. N-linked (GlcNAc...) asparagine glycosylation is found at N1975 and N1985. N2093, N2113, N2161, N2276, and N2451 each carry an N-linked (GlcNAc...) asparagine glycan. Residues 2229-2285 form the TIL 6 domain; that stretch reads CEEPFVYRACVDCERTCDNYEQLQTSPEKCTNKPVEGCFCPEGKVRVNNTCIEPGKC. In terms of domain architecture, VWFC 1 spans 2553–2622; it reads VACRHQDNVY…DSGQCCGKCE (70 aa). Residues N2647, N2654, N2663, N2794, N2810, N2865, N2929, N2964, and N3028 are each glycosylated (N-linked (GlcNAc...) asparagine). The VWFC 2 domain maps to 2842–2907; it reads VACRDGDKIY…AADHCCGRCV (66 aa). Intrachain disulfides connect C2971–C3040, C2991–C3054, C3004–C3070, and C3020–C3072. The CTCK domain occupies 2971–3076; sequence CNEKPQALSK…PARCHCAACG (106 aa).

In terms of processing, may be converted into the 260 kDa mature hemocytin by proteolysis.

Functionally, adhesive protein and relates to hemostasis or encapsulation of foreign substances for self-defense. The chain is Hemocytin from Bombyx mori (Silk moth).